The chain runs to 315 residues: tRNA dimethylallyltransferase (315 aa).

Residue Gly10–Thr17 coordinates ATP. Thr12–Thr17 lines the substrate pocket. Positions Asp35–Gln38 are interaction with substrate tRNA.

This sequence belongs to the IPP transferase family. As to quaternary structure, monomer. Requires Mg(2+) as cofactor.

It catalyses the reaction adenosine(37) in tRNA + dimethylallyl diphosphate = N(6)-dimethylallyladenosine(37) in tRNA + diphosphate. In terms of biological role, catalyzes the transfer of a dimethylallyl group onto the adenine at position 37 in tRNAs that read codons beginning with uridine, leading to the formation of N6-(dimethylallyl)adenosine (i(6)A). The chain is tRNA dimethylallyltransferase from Geobacillus thermodenitrificans (strain NG80-2).